The primary structure comprises 246 residues: DNA repair protein RecO (246 aa).

Belongs to the RecO family.

Functionally, involved in DNA repair and RecF pathway recombination. The protein is DNA repair protein RecO of Methylorubrum extorquens (strain PA1) (Methylobacterium extorquens).